The sequence spans 701 residues: Ephexin-1 (701 aa).

2 stretches are compositionally biased toward basic and acidic residues: residues 1-11 (METKNSEDQGK) and 26-48 (GPAEMRPELPPETAKETQNEEPR). The disordered stretch occupies residues 1-141 (METKNSEDQG…TPEECPALTD (141 aa)). Positions 1 to 264 (METKNSEDQG…LDILQPEETK (264 aa)) are regulatory region; modulates activity toward RHOA, RAC1 and CDC42. Polar residues predominate over residues 120–132 (ASESSSTPGNGTT). Tyr-172 is modified (phosphotyrosine). The segment at 187–226 (RRQQDAEIQGNSDGSQAGEDNAEEEEEEEEEPASPPERRA) is disordered. Residues 206–218 (DNAEEEEEEEEEP) are compositionally biased toward acidic residues. One can recognise a DH domain in the interval 264-448 (KLQEAMFELV…EMVVKACNEG (185 aa)). Residues 480–592 (WLLKQGELQQ…WMTSLAPNRR (113 aa)) form the PH domain. An SH3 domain is found at 603-664 (LDCPQVQCVH…PSSMTEEILN (62 aa)). Basic and acidic residues predominate over residues 679–690 (HKMEDPQRSQNK). Residues 679-701 (HKMEDPQRSQNKDRRKLGSRNRQ) form a disordered region. A compositionally biased stretch (basic residues) spans 691–701 (DRRKLGSRNRQ).

As to quaternary structure, interacts with CDK5R1 and EPHA4; activated by EPHA4 through the CDK5 kinase. In terms of processing, phosphorylation by CDK5 upon EPHA4 activation by EFNA1 may regulate dendritic spine morphogenesis. Src-dependent phosphorylation at Tyr-172 upon EPHA4 activation increases the guanine exchange factor activity toward RHOA. As to expression, expressed in telencephalic neurons (at protein level). Expressed in brain, spinal cord and testis.

Its subcellular location is the cytoplasm. The protein resides in the membrane. It localises to the cell projection. The protein localises to the growth cone. In terms of biological role, acts as a guanine nucleotide exchange factor (GEF) which differentially activates the GTPases RHOA, RAC1 and CDC42. Plays a role in axon guidance regulating ephrin-induced growth cone collapse and dendritic spine morphogenesis. Upon activation by ephrin through EPHA4, the GEF activity switches toward RHOA resulting in its activation. Activated RHOA promotes cone retraction at the expense of RAC1- and CDC42-stimulated growth cone extension. The polypeptide is Ephexin-1 (Ngef) (Rattus norvegicus (Rat)).